A 63-amino-acid polypeptide reads, in one-letter code: Small ribosomal subunit protein bS21 (63 aa).

The protein belongs to the bacterial ribosomal protein bS21 family.

The sequence is that of Small ribosomal subunit protein bS21 from Syntrophus aciditrophicus (strain SB).